The chain runs to 456 residues: Bifunctional protein GlmU (456 aa).

The tract at residues 1–229 (MLNVVILAAG…GWETLGVNSR (229 aa)) is pyrophosphorylase. UDP-N-acetyl-alpha-D-glucosamine-binding positions include 7–10 (LAAG), Lys-21, Gln-73, 78–79 (GT), 103–105 (YGD), Gly-139, Glu-154, Asn-169, and Asn-227. Asp-105 contributes to the Mg(2+) binding site. Asn-227 contributes to the Mg(2+) binding site. The interval 230-250 (VQQAELERRWQQEQARRQLEA) is linker. The interval 251–456 (GVTLADPARF…EGWQRPQKKS (206 aa)) is N-acetyltransferase. 2 residues coordinate UDP-N-acetyl-alpha-D-glucosamine: Arg-333 and Lys-351. His-363 acts as the Proton acceptor in catalysis. UDP-N-acetyl-alpha-D-glucosamine contacts are provided by Tyr-366 and Asn-377. Residues Ala-380, 386–387 (NY), Ser-405, Ala-423, and Arg-440 each bind acetyl-CoA.

In the N-terminal section; belongs to the N-acetylglucosamine-1-phosphate uridyltransferase family. It in the C-terminal section; belongs to the transferase hexapeptide repeat family. As to quaternary structure, homotrimer. It depends on Mg(2+) as a cofactor.

It localises to the cytoplasm. The enzyme catalyses alpha-D-glucosamine 1-phosphate + acetyl-CoA = N-acetyl-alpha-D-glucosamine 1-phosphate + CoA + H(+). The catalysed reaction is N-acetyl-alpha-D-glucosamine 1-phosphate + UTP + H(+) = UDP-N-acetyl-alpha-D-glucosamine + diphosphate. The protein operates within nucleotide-sugar biosynthesis; UDP-N-acetyl-alpha-D-glucosamine biosynthesis; N-acetyl-alpha-D-glucosamine 1-phosphate from alpha-D-glucosamine 6-phosphate (route II): step 2/2. It functions in the pathway nucleotide-sugar biosynthesis; UDP-N-acetyl-alpha-D-glucosamine biosynthesis; UDP-N-acetyl-alpha-D-glucosamine from N-acetyl-alpha-D-glucosamine 1-phosphate: step 1/1. Its pathway is bacterial outer membrane biogenesis; LPS lipid A biosynthesis. Its function is as follows. Catalyzes the last two sequential reactions in the de novo biosynthetic pathway for UDP-N-acetylglucosamine (UDP-GlcNAc). The C-terminal domain catalyzes the transfer of acetyl group from acetyl coenzyme A to glucosamine-1-phosphate (GlcN-1-P) to produce N-acetylglucosamine-1-phosphate (GlcNAc-1-P), which is converted into UDP-GlcNAc by the transfer of uridine 5-monophosphate (from uridine 5-triphosphate), a reaction catalyzed by the N-terminal domain. This Bordetella petrii (strain ATCC BAA-461 / DSM 12804 / CCUG 43448) protein is Bifunctional protein GlmU.